Reading from the N-terminus, the 506-residue chain is Cysteine--tRNA ligase (506 aa).

Cysteine 34 serves as a coordination point for Zn(2+). A 'HIGH' region motif is present at residues 36 to 46; the sequence is PTVYDFAHIGN. Zn(2+) contacts are provided by cysteine 230, histidine 269, and glutamate 273. The 'KMSKS' region signature appears at 302–306; the sequence is KMSKS. Lysine 305 contacts ATP.

This sequence belongs to the class-I aminoacyl-tRNA synthetase family. In terms of assembly, monomer. Requires Zn(2+) as cofactor.

It is found in the cytoplasm. The catalysed reaction is tRNA(Cys) + L-cysteine + ATP = L-cysteinyl-tRNA(Cys) + AMP + diphosphate. This is Cysteine--tRNA ligase from Brucella suis (strain ATCC 23445 / NCTC 10510).